Consider the following 132-residue polypeptide: UPF0292 protein PH1700 (132 aa).

The region spanning 20-100 is the Toprim domain; that stretch reads EGAIIVEGAR…KVDTETRREL (81 aa). Mg(2+) is bound by residues glutamate 26, aspartate 69, and aspartate 71.

The protein belongs to the UPF0292 family. Requires Mg(2+) as cofactor.

In Pyrococcus horikoshii (strain ATCC 700860 / DSM 12428 / JCM 9974 / NBRC 100139 / OT-3), this protein is UPF0292 protein PH1700.